A 513-amino-acid chain; its full sequence is ATP synthase subunit alpha (513 aa).

169–176 (GDRKTGKS) is a binding site for ATP.

It belongs to the ATPase alpha/beta chains family. As to quaternary structure, F-type ATPases have 2 components, CF(1) - the catalytic core - and CF(0) - the membrane proton channel. CF(1) has five subunits: alpha(3), beta(3), gamma(1), delta(1), epsilon(1). CF(0) has three main subunits: a(1), b(2) and c(9-12). The alpha and beta chains form an alternating ring which encloses part of the gamma chain. CF(1) is attached to CF(0) by a central stalk formed by the gamma and epsilon chains, while a peripheral stalk is formed by the delta and b chains.

The protein localises to the cell membrane. It carries out the reaction ATP + H2O + 4 H(+)(in) = ADP + phosphate + 5 H(+)(out). In terms of biological role, produces ATP from ADP in the presence of a proton gradient across the membrane. The alpha chain is a regulatory subunit. The chain is ATP synthase subunit alpha from Levilactobacillus brevis (strain ATCC 367 / BCRC 12310 / CIP 105137 / JCM 1170 / LMG 11437 / NCIMB 947 / NCTC 947) (Lactobacillus brevis).